The sequence spans 349 residues: Transcription factor HBP-1a (349 aa).

The segment covering 1 to 11 (MGSNDPSTPSK) has biased composition (polar residues). Disordered stretches follow at residues 1–39 (MGSN…WPGF), 101–196 (FHYP…NKPM), 224–277 (GATG…QAEC), and 312–349 (NTSL…QKEP). Low complexity predominate over residues 113–124 (PAGAQGAAPGAA). Over residues 174–191 (NENGSAQNGVSHSSSHGT) the composition is skewed to polar residues. One can recognise a bZIP domain in the interval 252–315 (ELKKQKRKLS…EELLSKNTSL (64 aa)). The tract at residues 254-273 (KKQKRKLSNRESARRSRLRK) is basic motif. Residues 261–277 (SNRESARRSRLRKQAEC) are compositionally biased toward basic and acidic residues. Positions 280–315 (LGQRAEALKSENSSLRIELDRIKKEYEELLSKNTSL) are leucine-zipper. Over residues 334–349 (MNERGDTNGGSHQKEP) the composition is skewed to basic and acidic residues.

Belongs to the bZIP family. Binds DNA as a dimer.

The protein localises to the nucleus. Binds to the hexamer motif 5'-ACGTCA-3' of histone gene promoters. The sequence is that of Transcription factor HBP-1a from Triticum aestivum (Wheat).